Consider the following 516-residue polypeptide: Putative transposase y4bL/y4kJ/y4tB (516 aa).

Positions 15–96 (IRTILRLTHE…PDWALVVREL (82 aa)) constitute an HTH IS408-type domain. Residues 138–319 (FRNRHAAGAV…SRRELFEEIE (182 aa)) form the Integrase catalytic domain. The interval 493–516 (ERPQAEHAAPTPAHTNIRGRSYYQ) is disordered.

Belongs to the transposase IS21/IS408/IS1162 family.

The polypeptide is Putative transposase y4bL/y4kJ/y4tB (Sinorhizobium fredii (strain NBRC 101917 / NGR234)).